The chain runs to 378 residues: UPF0754 membrane protein BT9727_0767 (378 aa).

The next 2 membrane-spanning stretches (helical) occupy residues 1-21 (MNIWLSMLTTTGLGAIIGGFT) and 357-377 (YLGALLGGMIGIVQGLLLLFL).

This sequence belongs to the UPF0754 family.

Its subcellular location is the cell membrane. The protein is UPF0754 membrane protein BT9727_0767 of Bacillus thuringiensis subsp. konkukian (strain 97-27).